The following is a 388-amino-acid chain: MALQLLPSTLSVPKKGSSMGAVAVKDTAAFLGVSSKAKKASLAVRTQVATAPSPVTTSPGSTASSPSGKKTLRQGVVVITGASSGLGLAAAKALAETGKWHVVMACRDFLKASKAAKAAGMADGSYTVMHLDLASLDSVRQFVDAFRRAEMPLDVLVCNAAIYRPTARTPTFTADGHEMSVGVNHLGHFLLARLLMEDLQKSDYPSRRMVIVGSITGNSNTLAGNVPPKASLGDLRGLAGGLSGASGSAMIDGDESFDGAKAYKDSKVCNMLTMQEFHRRYHEETGITFSSLYPGCIATTGLFREHIPLFRTLFPPFQKFVTKGFVSEAESGKRLAQVVAEPVLTKSGVYWSWNKDSASFENQLSQEASDPEKARKVWELSEKLVGLA.

Residues 1–74 constitute a chloroplast transit peptide; the sequence is MALQLLPSTL…SPSGKKTLRQ (74 aa). The span at 48–68 shows a compositional bias: low complexity; sequence VATAPSPVTTSPGSTASSPSG. The segment at 48 to 69 is disordered; the sequence is VATAPSPVTTSPGSTASSPSGK.

Belongs to the short-chain dehydrogenases/reductases (SDR) family. POR subfamily.

The protein localises to the plastid. It localises to the chloroplast. It carries out the reaction chlorophyllide a + NADP(+) = protochlorophyllide a + NADPH + H(+). Its pathway is porphyrin-containing compound metabolism; chlorophyll biosynthesis. In terms of biological role, phototransformation of protochlorophyllide (Pchlide) to chlorophyllide (Chlide). This chain is Protochlorophyllide reductase A, chloroplastic (PORA), found in Hordeum vulgare (Barley).